The sequence spans 708 residues: Protein MICRORCHIDIA 5 (708 aa).

Positions 1-11 are enriched in polar residues; the sequence is MAESGSTNPKS. The interval 1-47 is disordered; that stretch reads MAESGSTNPKSPSVVPDSTLGGLKRDLRNYHDGDDSNNLSIKKSKTT. Residues 23–34 show a composition bias toward basic and acidic residues; it reads LKRDLRNYHDGD. Residues 590–665 are a coiled coil; it reads SVNLEAELQK…LENRQEGVST (76 aa). Positions 672–679 match the Nuclear localization signal motif; sequence ARRDVTED.

Belongs to the MORC ATPase protein family. In terms of assembly, homodimer and heterodimer. Component of an RNA-directed DNA methylation (RdDM) complex. Mg(2+) is required as a cofactor. Mn(2+) serves as cofactor.

The protein localises to the nucleus. Exhibits ATPase activity. Binds DNA/RNA in a non-specific manner and exhibits endonuclease activity. Probably involved in DNA repair. Involved in RNA-directed DNA methylation (RdDM) as a component of the RdDM machinery and required for gene silencing. May also be involved in the regulation of chromatin architecture to maintain gene silencing. The chain is Protein MICRORCHIDIA 5 from Arabidopsis thaliana (Mouse-ear cress).